Here is a 430-residue protein sequence, read N- to C-terminus: Adenylosuccinate synthetase (430 aa).

Residues Gly12–Lys18 and Gly40–Thr42 contribute to the GTP site. Asp13 acts as the Proton acceptor in catalysis. Residues Asp13 and Gly40 each contribute to the Mg(2+) site. Residues Asp13–Lys16, Asn38–His41, Thr128, Arg142, Gln223, Thr238, and Arg302 contribute to the IMP site. His41 serves as the catalytic Proton donor. Val298–Arg304 provides a ligand contact to substrate. Residues Arg304, Lys330–Asp332, and Gly412–Gly414 each bind GTP.

This sequence belongs to the adenylosuccinate synthetase family. In terms of assembly, homodimer. Mg(2+) serves as cofactor.

It localises to the cytoplasm. It carries out the reaction IMP + L-aspartate + GTP = N(6)-(1,2-dicarboxyethyl)-AMP + GDP + phosphate + 2 H(+). Its pathway is purine metabolism; AMP biosynthesis via de novo pathway; AMP from IMP: step 1/2. In terms of biological role, plays an important role in the de novo pathway of purine nucleotide biosynthesis. Catalyzes the first committed step in the biosynthesis of AMP from IMP. This is Adenylosuccinate synthetase from Corynebacterium aurimucosum (strain ATCC 700975 / DSM 44827 / CIP 107346 / CN-1) (Corynebacterium nigricans).